A 339-amino-acid polypeptide reads, in one-letter code: Mycothiol acetyltransferase (339 aa).

2 consecutive N-acetyltransferase domains span residues 8–174 (YEQL…QGLT) and 176–339 (LTYP…GELN). Glu39 serves as a coordination point for 1D-myo-inositol 2-(L-cysteinylamino)-2-deoxy-alpha-D-glucopyranoside. 85 to 87 (LAV) provides a ligand contact to acetyl-CoA. 1D-myo-inositol 2-(L-cysteinylamino)-2-deoxy-alpha-D-glucopyranoside is bound by residues Glu207, Lys254, and Glu270. 274-276 (VCL) provides a ligand contact to acetyl-CoA. Tyr308 is a binding site for 1D-myo-inositol 2-(L-cysteinylamino)-2-deoxy-alpha-D-glucopyranoside.

Belongs to the acetyltransferase family. MshD subfamily. In terms of assembly, monomer.

The enzyme catalyses 1D-myo-inositol 2-(L-cysteinylamino)-2-deoxy-alpha-D-glucopyranoside + acetyl-CoA = mycothiol + CoA + H(+). Catalyzes the transfer of acetyl from acetyl-CoA to desacetylmycothiol (Cys-GlcN-Ins) to form mycothiol. The protein is Mycothiol acetyltransferase of Corynebacterium urealyticum (strain ATCC 43042 / DSM 7109).